The chain runs to 262 residues: Acyl-[acyl-carrier-protein]--UDP-N-acetylglucosamine O-acyltransferase (262 aa).

This sequence belongs to the transferase hexapeptide repeat family. LpxA subfamily. In terms of assembly, homotrimer.

The protein resides in the cytoplasm. The catalysed reaction is a (3R)-hydroxyacyl-[ACP] + UDP-N-acetyl-alpha-D-glucosamine = a UDP-3-O-[(3R)-3-hydroxyacyl]-N-acetyl-alpha-D-glucosamine + holo-[ACP]. The protein operates within glycolipid biosynthesis; lipid IV(A) biosynthesis; lipid IV(A) from (3R)-3-hydroxytetradecanoyl-[acyl-carrier-protein] and UDP-N-acetyl-alpha-D-glucosamine: step 1/6. In terms of biological role, involved in the biosynthesis of lipid A, a phosphorylated glycolipid that anchors the lipopolysaccharide to the outer membrane of the cell. The chain is Acyl-[acyl-carrier-protein]--UDP-N-acetylglucosamine O-acyltransferase from Salmonella schwarzengrund (strain CVM19633).